The following is a 958-amino-acid chain: MHQHPRSPAPAAPPSASRPGANRSDDRPNSPAFDPRVQLTRGLGIETEARSSGQTSSSRPAKEAISKLNQLVTNYHTKAALVILASRIDLTRSDDTPKINPKVNRWFAIDLEDIDALREQLRFWRINDVSEQPPPPLIIETYLDTKDLTNNQSLVALDEQGKRFDVLESLSRSSEAHAKGPVSSRSEDVILERWRVELGNTPNKALPADLGSILPKIYKQSIVTFRTLFTYSKLLPAWKLAKRNGRLHAHPALQIRYRILAGKPNPDDSRPDRLTTPLFDSSNKVVETYTFGTTESPVGYLSIQVTYRTSCEFRVDDSEALLSSRFMGADDEVFRPSLPSRESNLKAANSGVGSAPVEKRTVEDPDPSRAYGSLSTFHHVGPTTSASPISALRAARESGAASPSPPSSSSRKPVEVVKASPLGRAAVLANESSPGVARRSSISFPPFKAPPLSASPSLVDPPLGMSPRSGTMTRPQFPESKNMPPPSMAASARKSLPLPGASETTATSSNSASPRPTPIARYSSAFTHRRGRPSSGNINRIDDENSSGKTSATSSNPQPGSGLLAEATGTSADSIHADDENITEFLKMLDLRKDLLRTSNSASADVTARRTTATSAALTRFQRMRDSNAQLSESMSSSMLLQRSSTSSSKQLSGVPPMVAGTSISTASSPGKPISPHTPHTPAIPSRLSSNSIVDYGNERGREQPSSVGDYTPEGPTIPHRPSVVTVNAIDIPTSPGLPFPPYRRPSSAAPPPPPVATDDDEIFPFNLRSVSLGAEERSHNSLSALQRQHDLEGAKSNTQPTRREQRPPLASEDPSRRSSSTGHGTSPHKRTSLSGPTVAPSPSNNHVYQPRFSLCRGRGLSGGPHSLSSGSSSLARGAPSDLAERDHDRDVNASGSNSGTSTVEDRRAAGRRPSSGRNIPPPSQVEEDEPLLFAMSDFGASRRSFEEGRHGNHGRRL.

5 disordered regions span residues 1–62 (MHQH…RPAK), 337–417 (SLPS…VEVV), 430–576 (NESS…DSIH), 644–762 (SSTS…DDDE), and 790–958 (HDLE…GRRL). Residues 50–59 (RSSGQTSSSR) are compositionally biased toward polar residues. Positions 357 to 367 (VEKRTVEDPDP) are enriched in basic and acidic residues. Composition is skewed to low complexity over residues 397–411 (ESGAASPSPPSSSSR) and 501–514 (ASETTATSSNSASP). Polar residues predominate over residues 547-559 (SGKTSATSSNPQP). Over residues 644-653 (SSTSSSKQLS) the composition is skewed to low complexity. The segment covering 736-756 (PGLPFPPYRRPSSAAPPPPPV) has biased composition (pro residues). Polar residues predominate over residues 833–848 (SLSGPTVAPSPSNNHV). Over residues 864-881 (GPHSLSSGSSSLARGAPS) the composition is skewed to low complexity. Over residues 883–892 (LAERDHDRDV) the composition is skewed to basic and acidic residues. Residues 894 to 903 (ASGSNSGTST) show a composition bias toward polar residues.

The protein belongs to the ATG13 family. Fungi subfamily. As to quaternary structure, interacts with atg1 to form the atg1-atg13 kinase complex.

The protein resides in the cytoplasm. Its subcellular location is the preautophagosomal structure. Its function is as follows. Activates the atg1 kinase in a nutritional condition dependent manner through the TOR pathway, leading to autophagy. Also involved in cytoplasm to vacuole transport (Cvt) and more specifically in Cvt vesicle formation. Seems to play a role in the switching machinery regulating the conversion between the Cvt pathway and autophagy. Finally, atg13 is also required for glycogen storage during stationary phase. The polypeptide is Autophagy-related protein 13 (atg13) (Aspergillus niger (strain ATCC MYA-4892 / CBS 513.88 / FGSC A1513)).